Consider the following 309-residue polypeptide: Anamorsin homolog (309 aa).

The N-terminal SAM-like domain stretch occupies residues 4–169 (VSPGHSVLLL…SYEVGSSAQL (166 aa)). A linker region spans residues 170-218 (TLSFAKKKQVEKPKLDENTAKIWSLSAVDMNDDDIDLLDPDELLDEEDL). Positions 230, 242, 245, and 247 each coordinate [2Fe-2S] cluster. The tract at residues 230-247 (CGTGGDTKKRKACKNCTC) is fe-S binding site A. [4Fe-4S] cluster contacts are provided by Cys270, Cys273, Cys281, and Cys284. Short sequence motifs (cx2C motif) lie at residues 270 to 273 (CGNC) and 281 to 284 (CASC). The fe-S binding site B stretch occupies residues 270–284 (CGNCYLGDAFRCASC).

This sequence belongs to the anamorsin family. As to quaternary structure, monomer. Requires [2Fe-2S] cluster as cofactor. [4Fe-4S] cluster serves as cofactor.

The protein localises to the cytoplasm. It is found in the mitochondrion intermembrane space. Component of the cytosolic iron-sulfur (Fe-S) protein assembly (CIA) machinery. Required for the maturation of extramitochondrial Fe-S proteins. Part of an electron transfer chain functioning in an early step of cytosolic Fe-S biogenesis, facilitating the de novo assembly of a [4Fe-4S] cluster on the cytosolic Fe-S scaffold complex. Electrons are transferred from NADPH via a FAD- and FMN-containing diflavin oxidoreductase. Together with the diflavin oxidoreductase, also required for the assembly of the diferric tyrosyl radical cofactor of ribonucleotide reductase (RNR), probably by providing electrons for reduction during radical cofactor maturation in the catalytic small subunit. The polypeptide is Anamorsin homolog (Branchiostoma floridae (Florida lancelet)).